The sequence spans 354 residues: Uroporphyrinogen decarboxylase (354 aa).

Substrate is bound by residues 27–31, phenylalanine 46, aspartate 77, tyrosine 154, threonine 209, and histidine 327; that span reads RQAGR.

The protein belongs to the uroporphyrinogen decarboxylase family. As to quaternary structure, homodimer.

The protein resides in the cytoplasm. The catalysed reaction is uroporphyrinogen III + 4 H(+) = coproporphyrinogen III + 4 CO2. It functions in the pathway porphyrin-containing compound metabolism; protoporphyrin-IX biosynthesis; coproporphyrinogen-III from 5-aminolevulinate: step 4/4. Functionally, catalyzes the decarboxylation of four acetate groups of uroporphyrinogen-III to yield coproporphyrinogen-III. The protein is Uroporphyrinogen decarboxylase of Escherichia coli O157:H7.